The sequence spans 1033 residues: NACHT, LRR and PYD domains-containing protein 11 (1033 aa).

Positions 1–91 (MAESDSTDFD…CRKIIGRRNR (91 aa)) constitute a Pyrin domain. The region spanning 147 to 470 (LNVFLMGERA…AFLMAVPNYL (324 aa)) is the NACHT domain. Residue 153–160 (GERASGKT) participates in ATP binding. LRR repeat units follow at residues 588–611 (CCHLRTLKLSVQRIFQNKEPLIRP), 632–655 (MESLRELHIFDNDLNGISERILSK), 745–768 (GGSLRKLTLSSNPLRSDGMNILCD), 802–827 (SPTLRQLDLCVNRLKNYGVLHVTFPL), 859–882 (NEKLRSLEIGSNKIEDAGMQLLCG), and 919–944 (LERLNLLQNHLGNDGVAKLLESLISP).

It belongs to the NLRP family.

In terms of biological role, involved in inflammation. The sequence is that of NACHT, LRR and PYD domains-containing protein 11 (NLRP11) from Homo sapiens (Human).